Here is a 357-residue protein sequence, read N- to C-terminus: Probable leucine aminopeptidase TRV_02148.1 (357 aa).

A signal peptide spans 1 to 15; that stretch reads MKVLAALALSALAMA. Residue Asn-76 is glycosylated (N-linked (GlcNAc...) asparagine). Zn(2+)-binding residues include His-167 and Asp-185. The disordered stretch occupies residues 169-188; the sequence is DSINGKNPQGEAPGADDNGS. The N-linked (GlcNAc...) asparagine glycan is linked to Asn-186. Residues Glu-224 and Asp-251 each contribute to the Zn(2+) site. Asn-269 is a glycosylation site (N-linked (GlcNAc...) asparagine). A disulfide bridge links Cys-291 with Cys-295. Residue His-324 participates in Zn(2+) binding.

It belongs to the peptidase M28 family. M28E subfamily. As to quaternary structure, monomer. Zn(2+) serves as cofactor.

Its subcellular location is the secreted. In terms of biological role, probable extracellular aminopeptidase which contributes to pathogenicity. The sequence is that of Probable leucine aminopeptidase TRV_02148.1 from Trichophyton verrucosum (strain HKI 0517).